The following is a 54-amino-acid chain: Photoreceptor disk component PRCD (54 aa).

Cys2 carries S-palmitoyl cysteine lipidation. A disordered region spans residues 25–54; that stretch reads PEPSDVDGAARGSSLDADPQSSGREKEPLK.

Belongs to the PRCD family. Interacts with RHO/rhodopsin; the interaction promotes PRCD stability. Post-translationally, palmitoylated at Cys-2. Palmitoylation is essential for protein stability and trafficking to the photoreceptor outer segment, but does not appear to be essential for membrane localization. Probably palmitoylated by ZDHHC3. In terms of processing, phosphorylated.

Its subcellular location is the cell projection. The protein resides in the cilium. The protein localises to the photoreceptor outer segment. It localises to the membrane. It is found in the endoplasmic reticulum. Its subcellular location is the golgi apparatus. In terms of biological role, involved in vision. In Homo sapiens (Human), this protein is Photoreceptor disk component PRCD.